The following is a 1262-amino-acid chain: Separin homolog sep-1 (1262 aa).

One can recognise a Peptidase C50 domain in the interval 957–1051 (VQNAYYILDP…SVRTIPQALG (95 aa)). Residue C1040 is part of the active site. The interval 1147-1262 (KDQRNLPQTP…ARTPSRSRNL (116 aa)) is disordered. Composition is skewed to polar residues over residues 1151-1162 (NLPQTPKTSART) and 1177-1197 (FVTS…NKSP). A compositionally biased stretch (low complexity) spans 1243-1262 (TPTTRTTRSSARTPSRSRNL).

As to quaternary structure, forms a complex with securin-like protein ify-1 (via C-terminus). Interaction with ify-1 stabilizes sep-1. Also maintains the complex in the cytoplasm during interphase and recruits it to chromosomes during the first meiotic division. Expressed in oocytes. Expressed in male germline. Expressed in spermatocytes but undetectable in spermatids (at protein level).

The protein resides in the cytoplasm. It localises to the chromosome. The protein localises to the cytoplasmic granule. It is found in the cytoskeleton. Its subcellular location is the microtubule organizing center. The protein resides in the centrosome. It localises to the spindle. The protein localises to the cleavage furrow. It is found in the midbody. The enzyme catalyses All bonds known to be hydrolyzed by this endopeptidase have arginine in P1 and an acidic residue in P4. P6 is often occupied by an acidic residue or by a hydroxy-amino-acid residue, the phosphorylation of which enhances cleavage.. Its activity is regulated as follows. Probably maintained in an inactive state via its interaction with securin ify-1 which acts as a pseudosubstrate thereby blocking access to the catalytic site. Upon ify-1 degradation at the onset of anaphase, sep-1 is likely to become active. In addition, interaction with ify-1 stabilizes sep-1. In terms of biological role, cysteine protease, which plays a central role in homologous chromosome separation during meiosis I and in sister chromatid separation during embryonic mitosis. Promotes chromosome/sister chromatid segregation by cleaving the scc-1 (mitosis) and rec-8 (meiosis) subunits of the cohesin complex at the onset of anaphase. May cleave histone H3-like protein cpar-1 during meiosis I metaphase-anaphase transition. Promotes cortical granule exocytosis after oocyte fertilization during the first meiotic anaphase. Essential for embryonic cytokinesis by regulating rab-11-positive vesicle trafficking at the plasma membrane at the cleavage furrow and midbody. Regulates centriole segregation during spermatocyte meiosis. Required for embryonic anterior-posterior axis formation. This is Separin homolog sep-1 from Caenorhabditis elegans.